The primary structure comprises 235 residues: MERRKKQNEGLLSVYPPPPWYSRYFTDENVAKVKDLQSSDNSQLLEAPLKYLTPPSPPEAGAYHNFGDVWQVNDKLATLEDLGITQVYDGAAIRGEGQESGARVLELKKLTKSLLLAFVELTGIMGVSPEQFPAKFEHVRVLLINIHHILNEYRPHQARESLVTLMQQQINDKKQHVENIRQSCDKVRDTIRVLSKQFDQVDEFEETGGVTTEEVKYVSGKDKDLLVVKMAEQVL.

The protein belongs to the Mediator complex subunit 7 family. In terms of assembly, component of the Mediator complex.

Its subcellular location is the nucleus. Its function is as follows. Component of the Mediator complex, a coactivator involved in the regulated transcription of nearly all RNA polymerase II-dependent genes. Mediator functions as a bridge to convey information from gene-specific regulatory proteins to the basal RNA polymerase II transcription machinery. Mediator is recruited to promoters by direct interactions with regulatory proteins and serves as a scaffold for the assembly of a functional preinitiation complex with RNA polymerase II and the general transcription factors. This is Mediator of RNA polymerase II transcription subunit 7 (MED7) from Yarrowia lipolytica (strain CLIB 122 / E 150) (Yeast).